The following is a 143-amino-acid chain: Anti-sigma F factor (143 aa).

The protein belongs to the anti-sigma-factor family.

The enzyme catalyses L-seryl-[protein] + ATP = O-phospho-L-seryl-[protein] + ADP + H(+). The catalysed reaction is L-threonyl-[protein] + ATP = O-phospho-L-threonyl-[protein] + ADP + H(+). Functionally, binds to sigma F and blocks its ability to form an RNA polymerase holoenzyme (E-sigma F). Phosphorylates SpoIIAA on a serine residue. This phosphorylation may enable SpoIIAA to act as an anti-anti-sigma factor that counteracts SpoIIAB and thus releases sigma F from inhibition. The sequence is that of Anti-sigma F factor from Clostridium botulinum (strain Eklund 17B / Type B).